Reading from the N-terminus, the 362-residue chain is UDP-arabinopyranose mutase 3 (362 aa).

Positions 106–108 (DDD) match the DXD motif motif. N-linked (Glc...) arginine glycosylation is present at arginine 154.

This sequence belongs to the RGP family. In terms of assembly, heterodimer with RGP1. The cofactor is Mn(2+). Mg(2+) serves as cofactor. Post-translationally, reversibly glycosylated in vitro by UDP-glucose, UDP-xylose and UDP-galactose, but not UDP-mannose. As to expression, specifically expressed in developing seeds.

Its subcellular location is the cytoplasm. It is found in the cytosol. The protein resides in the golgi apparatus. The catalysed reaction is UDP-beta-L-arabinofuranose = UDP-beta-L-arabinopyranose. Functionally, UDP-L-arabinose mutase involved in the biosynthesis of cell wall non-cellulosic polysaccharides. Catalyzes the interconvertion of UDP-L-arabinopyranose (UDP-Arap) and UDP-L-arabinofuranose (UDP-Araf). Preferentially catalyzes the formation of UDP-Arap from UDP-Araf. At thermodynamic equilibrium in vitro the ratio of the pyranose form over the furanose form is 95:5. Is not active on other UDP-sugars (UDP-Gal, UDP-Xyl, UDP-Glc, GDP-Man and GDP-Fuc). Is probably active as heteromer in vivo. The polypeptide is UDP-arabinopyranose mutase 3 (Arabidopsis thaliana (Mouse-ear cress)).